We begin with the raw amino-acid sequence, 203 residues long: ATP-dependent Clp protease proteolytic subunit (203 aa).

The Nucleophile role is filled by Ser107. The active site involves His132.

The protein belongs to the peptidase S14 family. In terms of assembly, fourteen ClpP subunits assemble into 2 heptameric rings which stack back to back to give a disk-like structure with a central cavity, resembling the structure of eukaryotic proteasomes.

The protein resides in the cytoplasm. The catalysed reaction is Hydrolysis of proteins to small peptides in the presence of ATP and magnesium. alpha-casein is the usual test substrate. In the absence of ATP, only oligopeptides shorter than five residues are hydrolyzed (such as succinyl-Leu-Tyr-|-NHMec, and Leu-Tyr-Leu-|-Tyr-Trp, in which cleavage of the -Tyr-|-Leu- and -Tyr-|-Trp bonds also occurs).. In terms of biological role, cleaves peptides in various proteins in a process that requires ATP hydrolysis. Has a chymotrypsin-like activity. Plays a major role in the degradation of misfolded proteins. In Shewanella pealeana (strain ATCC 700345 / ANG-SQ1), this protein is ATP-dependent Clp protease proteolytic subunit.